A 376-amino-acid chain; its full sequence is uncharacterized protein (376 aa).

The signal sequence occupies residues 1-31; it reads MSRHKVYKAISSYVIIAIIIIAIVAVVGVLL. The disordered stretch occupies residues 37–57; that stretch reads SSSSVTSTTTPTTSSSVSPSS.

This sequence belongs to the bacterial solute-binding protein 1 family. WtpA subfamily.

This is an uncharacterized protein from Sulfurisphaera tokodaii (strain DSM 16993 / JCM 10545 / NBRC 100140 / 7) (Sulfolobus tokodaii).